The following is a 419-amino-acid chain: Homeobox-containing protein 1 (419 aa).

Residues 18 to 49 (DEPRFTIEQIDLLQRLRRTGMTKHEILHALET) form the HNF-p1 domain. The interval 56 to 152 (EHSDKFGRRS…GQRSYSFEAS (97 aa)) is disordered. Lys-60 is covalently cross-linked (Glycyl lysine isopeptide (Lys-Gly) (interchain with G-Cter in SUMO2)). 2 stretches are compositionally biased toward low complexity: residues 64 to 73 (RSSYGGSSYG) and 81 to 93 (ASSS…TQTQ). Polar residues predominate over residues 94 to 132 (HSGMSPSPSNSYDTSPLPCTTNQNGRENNDRLSTSNGKM). A Glycyl lysine isopeptide (Lys-Gly) (interchain with G-Cter in SUMO2) cross-link involves residue Lys-131. The POU-specific atypical domain maps to 145 to 241 (RSYSFEASEE…PGATLSMRPA (97 aa)). Position 148 is a phosphoserine (Ser-148). A Glycyl lysine isopeptide (Lys-Gly) (interchain with G-Cter in SUMO2) cross-link involves residue Lys-161. Ser-170 is modified (phosphoserine). Glycyl lysine isopeptide (Lys-Gly) (interchain with G-Cter in SUMO2) cross-links involve residues Lys-174, Lys-217, and Lys-310. A DNA-binding region (homeobox) is located at residues 267 to 341 (RRGSRFTWRK…NRRKEIKRRA (75 aa)). A disordered region spans residues 352-384 (IDVQSPGGHSNSDDVDGNDYSEQDDSTSHSDHQ). The span at 364 to 376 (DDVDGNDYSEQDD) shows a compositional bias: acidic residues. Lys-412 is covalently cross-linked (Glycyl lysine isopeptide (Lys-Gly) (interchain with G-Cter in SUMO1); alternate). Residue Lys-412 forms a Glycyl lysine isopeptide (Lys-Gly) (interchain with G-Cter in SUMO2); alternate linkage.

In terms of assembly, associates with the telomerase holoenzyme complex. Interacts with DKC1, XRCC6 and COIL.

The protein resides in the nucleus. Its subcellular location is the cytoplasm. It is found in the chromosome. It localises to the telomere. The protein localises to the cajal body. The protein resides in the PML body. Binds directly to 5'-TTAGGG-3' repeats in telomeric DNA. Associates with the telomerase complex at sites of active telomere processing and positively regulates telomere elongation. Important for TERT binding to chromatin, indicating a role in recruitment of the telomerase complex to telomeres. Also plays a role in the alternative lengthening of telomeres (ALT) pathway in telomerase-negative cells where it promotes formation and/or maintenance of ALT-associated promyelocytic leukemia bodies (APBs). Enhances formation of telomere C-circles in ALT cells, suggesting a possible role in telomere recombination. Might also be involved in the DNA damage response at telomeres. The protein is Homeobox-containing protein 1 (Hmbox1) of Mus musculus (Mouse).